The sequence spans 65 residues: Conotoxin TsMRCL-04 (65 aa).

A signal peptide spans 1-20 (MRCLPVFIILLLLIPSAASA). The propeptide occupies 21 to 48 (AQPETKDDAALASFYDNAKRTLQRHWAK). Glutamic acid 1-amide is present on E63.

This sequence belongs to the conotoxin T superfamily. Contains 2 disulfide bonds that can be either 'C1-C3, C2-C4' or 'C1-C4, C2-C3', since these disulfide connectivities have been observed for conotoxins with cysteine framework V (for examples, see AC P0DQQ7 and AC P81755). As to expression, expressed by the venom duct.

The protein localises to the secreted. In Conus tessulatus (Tessellate cone), this protein is Conotoxin TsMRCL-04.